The sequence spans 419 residues: CinA-like protein (419 aa).

The protein belongs to the CinA family.

This Synechococcus sp. (strain CC9902) protein is CinA-like protein.